A 367-amino-acid polypeptide reads, in one-letter code: 3-ketodihydrosphingosine reductase ksrA (367 aa).

The helical transmembrane segment at A12–S32 threads the bilayer. NADPH is bound by residues G53, S55, G57, R78, K82, D108, and L109. The GXSXG motif lies at G53–G57. The chain crosses the membrane as a helical span at residues L193 to P213. The Proton acceptor role is filled by Y211. NADP(+) contacts are provided by Y211, K215, and I259. The Lowers pKa of active site Tyr role is filled by K215.

It belongs to the short-chain dehydrogenases/reductases (SDR) family.

The protein resides in the endoplasmic reticulum membrane. It catalyses the reaction sphinganine + NADP(+) = 3-oxosphinganine + NADPH + H(+). The protein operates within lipid metabolism; sphingolipid metabolism. In terms of biological role, catalyzes the reduction of 3'-oxosphinganine (3-ketodihydrosphingosine/KDS) to sphinganine (dihydrosphingosine/DHS), the second step of de novo sphingolipid biosynthesis. In Aspergillus fumigatus (strain ATCC MYA-4609 / CBS 101355 / FGSC A1100 / Af293) (Neosartorya fumigata), this protein is 3-ketodihydrosphingosine reductase ksrA.